Reading from the N-terminus, the 129-residue chain is NADPH-dependent 7-cyano-7-deazaguanine reductase (129 aa).

Catalysis depends on Cys-34, which acts as the Thioimide intermediate. The Proton donor role is filled by Asp-41. Residues 56-58 (VEL) and 75-76 (HE) each bind substrate.

The protein belongs to the GTP cyclohydrolase I family. QueF type 1 subfamily.

The protein localises to the cytoplasm. It catalyses the reaction 7-aminomethyl-7-carbaguanine + 2 NADP(+) = 7-cyano-7-deazaguanine + 2 NADPH + 3 H(+). It functions in the pathway tRNA modification; tRNA-queuosine biosynthesis. Its function is as follows. Catalyzes the NADPH-dependent reduction of 7-cyano-7-deazaguanine (preQ0) to 7-aminomethyl-7-deazaguanine (preQ1). In Thioalkalivibrio sulfidiphilus (strain HL-EbGR7), this protein is NADPH-dependent 7-cyano-7-deazaguanine reductase.